The sequence spans 876 residues: Alanine--tRNA ligase (876 aa).

Zn(2+)-binding residues include histidine 568, histidine 572, cysteine 670, and histidine 674.

It belongs to the class-II aminoacyl-tRNA synthetase family. It depends on Zn(2+) as a cofactor.

It is found in the cytoplasm. The enzyme catalyses tRNA(Ala) + L-alanine + ATP = L-alanyl-tRNA(Ala) + AMP + diphosphate. Its function is as follows. Catalyzes the attachment of alanine to tRNA(Ala) in a two-step reaction: alanine is first activated by ATP to form Ala-AMP and then transferred to the acceptor end of tRNA(Ala). Also edits incorrectly charged Ser-tRNA(Ala) and Gly-tRNA(Ala) via its editing domain. The protein is Alanine--tRNA ligase of Geotalea uraniireducens (strain Rf4) (Geobacter uraniireducens).